Here is a 99-residue protein sequence, read N- to C-terminus: Integration host factor subunit alpha (99 aa).

Positions 49 to 75 (FGNFDLRDKNQRPGRNPKTGEDIPITA) are disordered.

It belongs to the bacterial histone-like protein family. Heterodimer of an alpha and a beta chain.

In terms of biological role, this protein is one of the two subunits of integration host factor, a specific DNA-binding protein that functions in genetic recombination as well as in transcriptional and translational control. The sequence is that of Integration host factor subunit alpha from Klebsiella pneumoniae (strain 342).